Reading from the N-terminus, the 99-residue chain is Photosystem II reaction center Psb28 protein (99 aa).

The protein belongs to the Psb28 family. Part of the photosystem II complex.

It is found in the cell inner membrane. The sequence is that of Photosystem II reaction center Psb28 protein from Gloeobacter violaceus (strain ATCC 29082 / PCC 7421).